The sequence spans 500 residues: Endonuclease domain-containing 1 protein (500 aa).

The signal sequence occupies residues 1 to 21 (MGTARWLALGSLFALAGLLEG). The disordered stretch occupies residues 293-323 (ERMVQSQKSSSPLSSTRSKRSTLLPPEASEG). Positions 297–317 (QSQKSSSPLSSTRSKRSTLLP) are enriched in low complexity. K407 bears the N6-acetyllysine mark.

It belongs to the DNA/RNA non-specific endonuclease family. As to quaternary structure, interacts with RNF26; this interaction is important to modulate innate immune signaling through the cGAS-STING pathway.

Its subcellular location is the secreted. In terms of biological role, may act as a DNase and a RNase. Plays a role in the modulation of innate immune signaling through the cGAS-STING pathway by interacting with RNF26. The chain is Endonuclease domain-containing 1 protein (ENDOD1) from Homo sapiens (Human).